The sequence spans 380 residues: Succinate--CoA ligase [ADP-forming] subunit beta (380 aa).

The region spanning 9-236 (KGVFADAGIP…EAAGDELEAK (228 aa)) is the ATP-grasp domain. ATP contacts are provided by residues lysine 45, 52–54 (GRG), glutamate 91, valine 94, and glutamate 99. Asparagine 191 and aspartate 205 together coordinate Mg(2+). Substrate-binding positions include asparagine 256 and 313–315 (GIT).

This sequence belongs to the succinate/malate CoA ligase beta subunit family. Heterotetramer of two alpha and two beta subunits. It depends on Mg(2+) as a cofactor.

It catalyses the reaction succinate + ATP + CoA = succinyl-CoA + ADP + phosphate. The catalysed reaction is GTP + succinate + CoA = succinyl-CoA + GDP + phosphate. It participates in carbohydrate metabolism; tricarboxylic acid cycle; succinate from succinyl-CoA (ligase route): step 1/1. In terms of biological role, succinyl-CoA synthetase functions in the citric acid cycle (TCA), coupling the hydrolysis of succinyl-CoA to the synthesis of either ATP or GTP and thus represents the only step of substrate-level phosphorylation in the TCA. The beta subunit provides nucleotide specificity of the enzyme and binds the substrate succinate, while the binding sites for coenzyme A and phosphate are found in the alpha subunit. This is Succinate--CoA ligase [ADP-forming] subunit beta from Natronomonas pharaonis (strain ATCC 35678 / DSM 2160 / CIP 103997 / JCM 8858 / NBRC 14720 / NCIMB 2260 / Gabara) (Halobacterium pharaonis).